The sequence spans 417 residues: COP9 signalosome complex subunit 7a (417 aa).

In terms of domain architecture, PCI spans 2 to 179 (EQTKALNALE…EMVQINSVAA (178 aa)). The segment at 240 to 417 (DEQKGAVPSS…KRGSKRKLTA (178 aa)) is disordered. Positions 263–290 (RGGGGGGDGAGAGGSFRGSGYSRGGGLS) are enriched in gly residues. 3 stretches are compositionally biased toward low complexity: residues 291-311 (QGYRSSQRGSHQQHQNQSRQQ), 320-330 (SNQSGTNSLLT), and 343-352 (PSAVSPSAAA). Positions 367–379 (METGSGSGSGPLG) are enriched in gly residues. The span at 385-405 (DMDDSEEDIDDDTMDLDDEGD) shows a compositional bias: acidic residues.

The protein belongs to the CSN7/EIF3M family. CSN7 subfamily. Component of the COP9 signalosome (CSN) complex.

The protein localises to the cytoplasm. Its subcellular location is the nucleus. Functionally, component of the COP9 signalosome (CSN) complex that acts as an regulator of the ubiquitin (Ubl) conjugation pathway by mediating the deneddylation of the cullin subunit of SCF-type E3 ubiquitin-protein ligase complexes. The CSN complex is involved in the regulation of the circadian clock through its control of the stability of the SCF(FWD1) complex. The polypeptide is COP9 signalosome complex subunit 7a (csn-7a) (Neurospora crassa (strain ATCC 24698 / 74-OR23-1A / CBS 708.71 / DSM 1257 / FGSC 987)).